The sequence spans 618 residues: Cationic amino acid transporter 3 (618 aa).

Residues M1–D36 are Cytoplasmic-facing. A helical membrane pass occupies residues L37–V57. The Extracellular portion of the chain corresponds to A58–K61. The helical transmembrane segment at A62–L82 threads the bilayer. Topologically, residues C83 to E107 are cytoplasmic. Residues L108–V128 traverse the membrane as a helical segment. Residues A129–E162 are Extracellular-facing. A helical transmembrane segment spans residues Y163–A183. At S184 to K191 the chain is on the cytoplasmic side. A helical membrane pass occupies residues V192–G212. Residues E213–G244 are Extracellular-facing. A glycan (N-linked (GlcNAc...) asparagine) is linked at N232. The helical transmembrane segment at F245 to V265 threads the bilayer. The Cytoplasmic segment spans residues G266–P285. A helical membrane pass occupies residues M286–L306. The Extracellular portion of the chain corresponds to T307–Y335. A helical transmembrane segment spans residues L336–M356. Residues P357–T380 lie on the Cytoplasmic side of the membrane. Residues H381–F401 traverse the membrane as a helical segment. The Extracellular segment spans residues E402 to L406. The chain crosses the membrane as a helical span at residues V407–I427. Topologically, residues L428–R474 are cytoplasmic. Residues V475 to T495 traverse the membrane as a helical segment. The Extracellular portion of the chain corresponds to W496–P506. Residues V507–W527 traverse the membrane as a helical segment. Residues R528–K539 are Cytoplasmic-facing. The chain crosses the membrane as a helical span at residues V540 to Q560. Topologically, residues M561 to R568 are extracellular. A helical transmembrane segment spans residues F569–M589. Residues K590–I618 are Cytoplasmic-facing. Residue T605 is modified to Phosphothreonine. Position 617 is a phosphoserine (S617).

The protein belongs to the amino acid-polyamine-organocation (APC) superfamily. Cationic amino acid transporter (CAT) (TC 2.A.3.3) family. In terms of processing, N-glycosylated. Expressed in adult brain and in a wide variety of embryonic tissues.

The protein localises to the cell membrane. It catalyses the reaction L-arginine(in) = L-arginine(out). The enzyme catalyses L-lysine(in) = L-lysine(out). The catalysed reaction is L-ornithine(in) = L-ornithine(out). Functionally, uniporter that mediates the uptake of cationic L-amino acids such as L-arginine, L-lysine and L-ornithine. The transport is sodium ions- and pH-independent, moderately trans-stimulated and is mediated by passive diffusion. The protein is Cationic amino acid transporter 3 of Mus musculus (Mouse).